Reading from the N-terminus, the 264-residue chain is MESGFTSKDTYLSHFNPRDYLEKYYSFGSRHCAENEILRHLLKNLFKIFCLGAVKGELLIDIGSGPTIYQLLSACESFTEIIVSDYTDQNLWELQKWLKKEPGAFDWSPVVTYVCDLEGNRMKGPEKEEKLRRAIKQVLKCDVTQSQPLGGVSLPPADCLLSTLCLDAACPDLPAYRTALRNLGSLLKPGGFLVMVDALKSSYYMIGEQKFSSLPLGWETVRDAVEEAGYTIEQFEVISQNYSSTTSNNEGLFSLVGRKPGRSE.

At arginine 18 the chain carries Citrulline; alternate. The S-adenosyl-L-methionine site is built by tyrosine 20, tyrosine 25, glycine 63, tyrosine 69, aspartate 85, threonine 87, and asparagine 90. Residue arginine 132 is modified to Citrulline; alternate. Residues 142-143 (DV) and threonine 163 each bind S-adenosyl-L-methionine. A Citrulline; alternate modification is found at arginine 181. Nicotinamide-binding residues include aspartate 197 and serine 213.

It belongs to the class I-like SAM-binding methyltransferase superfamily. NNMT/PNMT/TEMT family. In terms of assembly, monomer. Deiminated by PADI1 and PADI2. Expressed in white adipose tissue and liver (at protein level).

Its subcellular location is the cytoplasm. It carries out the reaction nicotinamide + S-adenosyl-L-methionine = 1-methylnicotinamide + S-adenosyl-L-homocysteine. It participates in cofactor metabolism. The protein operates within amino-acid degradation. Its activity is regulated as follows. Inhibited by 6-methoxynicotinamide (JBSNF-000088). In terms of biological role, catalyzes the N-methylation of nicotinamide using the universal methyl donor S-adenosyl-L-methionine to form N1-methylnicotinamide and S-adenosyl-L-homocysteine, a predominant nicotinamide/vitamin B3 clearance pathway. Plays a central role in regulating cellular methylation potential, by consuming S-adenosyl-L-methionine and limiting its availability for other methyltransferases. Actively mediates genome-wide epigenetic and transcriptional changes through hypomethylation of repressive chromatin marks, such as H3K27me3. In a developmental context, contributes to low levels of the repressive histone marks that characterize pluripotent embryonic stem cell pre-implantation state. Acts as a metabolic regulator primarily on white adipose tissue energy expenditure as well as hepatic gluconeogenesis and cholesterol biosynthesis. In white adipocytes, regulates polyamine flux by consuming S-adenosyl-L-methionine which provides for propylamine group in polyamine biosynthesis, whereas by consuming nicotinamide controls NAD(+) levels through the salvage pathway. Via its product N1-methylnicotinamide regulates protein acetylation in hepatocytes, by repressing the ubiquitination and increasing the stability of SIRT1 deacetylase. Can also N-methylate other pyridines structurally related to nicotinamide and play a role in xenobiotic detoxification. This is Nicotinamide N-methyltransferase (Nnmt) from Mus musculus (Mouse).